We begin with the raw amino-acid sequence, 540 residues long: Collagen alpha-1(XXIII) chain (540 aa).

Residues 1–26 (MGPGERAGGGGDAGKGNAAGGGGGGR) are compositionally biased toward gly residues. Residues 1-28 (MGPGERAGGGGDAGKGNAAGGGGGGRSA) form a disordered region. Residues 1–34 (MGPGERAGGGGDAGKGNAAGGGGGGRSATTAGSR) are Cytoplasmic-facing. The chain crosses the membrane as a helical; Signal-anchor for type II membrane protein span at residues 35–56 (AVSALCLLLSVGSAAACLLLGV). At 57–540 (QAAALQGRVA…GLPVPGCWHK (484 aa)) the chain is on the extracellular side. Disordered regions lie at residues 109–304 (AREA…GEQG) and 316–540 (LDAL…CWHK). Collagen-like domains follow at residues 124-243 (GRRG…PGKK), 251-305 (QPGP…EQGD), 321-380 (GPPG…MGLS), 412-460 (GPPG…GPPG), and 463-522 (GLPG…PGLD). Low complexity-rich tracts occupy residues 140-156 (QSGR…DGKP) and 168-183 (PGDF…DGAA). Residues 185 to 195 (PPGPPGPPGAR) are compositionally biased toward pro residues. Pro residues predominate over residues 322–334 (PPGPQGPPGPPGI). Basic and acidic residues predominate over residues 350–362 (DGEKGPKGQKGDP). Pro residues predominate over residues 411-422 (PGPPGPPGPPGP). Composition is skewed to basic and acidic residues over residues 435–444 (DGAKGEKGAS) and 486–503 (RGEK…ERGV).

Homotrimer. In terms of processing, undergoes proteolytic cleavage by furin protease to yield a 60 kDa soluble form that forms a homotrimer and exhibits a low affinity interaction with heparin.

The protein resides in the cell membrane. This is Collagen alpha-1(XXIII) chain (COL23A1) from Homo sapiens (Human).